A 233-amino-acid chain; its full sequence is Nucleoside diphosphate kinase 2, chloroplastic (233 aa).

Residues 1–67 (MEAMSGLSSP…LISHSLPRKK (67 aa)) constitute a chloroplast transit peptide. 6 residues coordinate ATP: Lys93, Phe141, Arg169, Thr175, Arg186, and Asn196. His199 acts as the Pros-phosphohistidine intermediate in catalysis.

The protein belongs to the NDK family. Requires Mg(2+) as cofactor.

The protein localises to the plastid. Its subcellular location is the chloroplast. The catalysed reaction is a 2'-deoxyribonucleoside 5'-diphosphate + ATP = a 2'-deoxyribonucleoside 5'-triphosphate + ADP. It carries out the reaction a ribonucleoside 5'-diphosphate + ATP = a ribonucleoside 5'-triphosphate + ADP. Major role in the synthesis of nucleoside triphosphates other than ATP. The ATP gamma phosphate is transferred to the NDP beta phosphate via a ping-pong mechanism, using a phosphorylated active-site intermediate. This chain is Nucleoside diphosphate kinase 2, chloroplastic (NDPK2), found in Spinacia oleracea (Spinach).